The chain runs to 156 residues: MNINATLIGQSVAFFIFVIFCMKFVWPPVIAALHERQKKIADGLDAASRAARDLELAQEKAGQQLREAKAQAAEIIEQAKKRGTQIVDEARETARVEADRVKAQAQAEIEQELNGVKDALRAQLGSLAVNGAEKILGATIDQNAHAELVNKLAAEI.

A helical membrane pass occupies residues 12–32; that stretch reads VAFFIFVIFCMKFVWPPVIAA.

The protein belongs to the ATPase B chain family. As to quaternary structure, F-type ATPases have 2 components, F(1) - the catalytic core - and F(0) - the membrane proton channel. F(1) has five subunits: alpha(3), beta(3), gamma(1), delta(1), epsilon(1). F(0) has three main subunits: a(1), b(2) and c(10-14). The alpha and beta chains form an alternating ring which encloses part of the gamma chain. F(1) is attached to F(0) by a central stalk formed by the gamma and epsilon chains, while a peripheral stalk is formed by the delta and b chains.

It localises to the cell inner membrane. Its function is as follows. F(1)F(0) ATP synthase produces ATP from ADP in the presence of a proton or sodium gradient. F-type ATPases consist of two structural domains, F(1) containing the extramembraneous catalytic core and F(0) containing the membrane proton channel, linked together by a central stalk and a peripheral stalk. During catalysis, ATP synthesis in the catalytic domain of F(1) is coupled via a rotary mechanism of the central stalk subunits to proton translocation. In terms of biological role, component of the F(0) channel, it forms part of the peripheral stalk, linking F(1) to F(0). The chain is ATP synthase subunit b from Pseudomonas savastanoi pv. phaseolicola (strain 1448A / Race 6) (Pseudomonas syringae pv. phaseolicola (strain 1448A / Race 6)).